A 1083-amino-acid polypeptide reads, in one-letter code: Glutamate receptor-interacting protein 2 (1083 aa).

3 PDZ domains span residues 58 to 141 (IVEL…EYEL), 156 to 244 (TIEI…EYDV), and 258 to 342 (LVEI…LPAH). Residues 408–422 (AGTPGFSSQNSNTLP) show a composition bias toward polar residues. The tract at residues 408–460 (AGTPGFSSQNSNTLPRTVHPMSPRTTMNRRRQKRKDHKSSLSLASSTVGPGGQ) is disordered. Over residues 434–444 (MNRRRQKRKDH) the composition is skewed to basic residues. 3 consecutive PDZ domains span residues 468–555 (EIIL…EIEF), 569–652 (HVKL…RKDE), and 667–749 (TVEL…KKQT). Disordered stretches follow at residues 754–783 (PQRL…LSEI), 853–872 (NEQD…GLET), and 936–965 (GSHH…VHNA). Over residues 774–783 (SQKTSKLSEI) the composition is skewed to polar residues. Residues 945–963 (PKKENKLSQDARSKKEEVH) are compositionally biased toward basic and acidic residues. In terms of domain architecture, PDZ 7 spans 974–1056 (KVTVQKDMDT…RLDLVISRGL (83 aa)).

It belongs to the GRIP2 family. As to expression, enriched in the mitochondrial cloud of stage I oocytes, before becoming concentrated at the tip of the vegetal cortex in stage II oocytes. Expression becomes localized to the germ plasm of stage III-IV oocytes and early cleavage stages. At the tailbud stage, localizes to the migrating primordial germ cells (PGCs) until PGC migration is complete (stage 40), at which point expression disappears. In the adult, expressed in the brain, ovary, eye, muscle, spinal cord and very weakly in adipocytes.

Its subcellular location is the cytoplasm. Plays an important role in primordial germ cell (PGC) maintenance and efficiency of PGC migration. This Xenopus laevis (African clawed frog) protein is Glutamate receptor-interacting protein 2.